The following is a 628-amino-acid chain: Biosynthetic arginine decarboxylase (628 aa).

Lys-99 is modified (N6-(pyridoxal phosphate)lysine). 279 to 289 lines the substrate pocket; it reads VDVGGGLGIDY.

This sequence belongs to the Orn/Lys/Arg decarboxylase class-II family. SpeA subfamily. It depends on Mg(2+) as a cofactor. The cofactor is pyridoxal 5'-phosphate.

The enzyme catalyses L-arginine + H(+) = agmatine + CO2. The protein operates within amine and polyamine biosynthesis; agmatine biosynthesis; agmatine from L-arginine: step 1/1. Catalyzes the biosynthesis of agmatine from arginine. The chain is Biosynthetic arginine decarboxylase from Xylella fastidiosa (strain M23).